A 390-amino-acid polypeptide reads, in one-letter code: Dual-specificity RNA methyltransferase RlmN (390 aa).

The active-site Proton acceptor is the Glu-110. One can recognise a Radical SAM core domain in the interval 116–355 (EADRATLCVS…VIIRKTRGDD (240 aa)). Cys-123 and Cys-360 form a disulfide bridge. Cys-130, Cys-134, and Cys-137 together coordinate [4Fe-4S] cluster. Residues 184 to 185 (GE), Ser-216, 238 to 240 (SLH), and Asn-317 each bind S-adenosyl-L-methionine. The active-site S-methylcysteine intermediate is Cys-360.

Belongs to the radical SAM superfamily. RlmN family. It depends on [4Fe-4S] cluster as a cofactor.

It localises to the cytoplasm. The enzyme catalyses adenosine(2503) in 23S rRNA + 2 reduced [2Fe-2S]-[ferredoxin] + 2 S-adenosyl-L-methionine = 2-methyladenosine(2503) in 23S rRNA + 5'-deoxyadenosine + L-methionine + 2 oxidized [2Fe-2S]-[ferredoxin] + S-adenosyl-L-homocysteine. The catalysed reaction is adenosine(37) in tRNA + 2 reduced [2Fe-2S]-[ferredoxin] + 2 S-adenosyl-L-methionine = 2-methyladenosine(37) in tRNA + 5'-deoxyadenosine + L-methionine + 2 oxidized [2Fe-2S]-[ferredoxin] + S-adenosyl-L-homocysteine. Specifically methylates position 2 of adenine 2503 in 23S rRNA and position 2 of adenine 37 in tRNAs. m2A2503 modification seems to play a crucial role in the proofreading step occurring at the peptidyl transferase center and thus would serve to optimize ribosomal fidelity. The protein is Dual-specificity RNA methyltransferase RlmN of Haemophilus influenzae (strain PittEE).